Consider the following 247-residue polypeptide: tRNA (guanine-N(1)-)-methyltransferase (247 aa).

S-adenosyl-L-methionine contacts are provided by residues glycine 113 and isoleucine 133–methionine 138.

This sequence belongs to the RNA methyltransferase TrmD family. As to quaternary structure, homodimer.

It is found in the cytoplasm. The enzyme catalyses guanosine(37) in tRNA + S-adenosyl-L-methionine = N(1)-methylguanosine(37) in tRNA + S-adenosyl-L-homocysteine + H(+). Its function is as follows. Specifically methylates guanosine-37 in various tRNAs. This chain is tRNA (guanine-N(1)-)-methyltransferase, found in Vibrio cholerae serotype O1 (strain ATCC 39541 / Classical Ogawa 395 / O395).